The chain runs to 69 residues: Small ribosomal subunit protein uS14 (69 aa).

Zn(2+) contacts are provided by C33, C36, C51, and C54.

The protein belongs to the universal ribosomal protein uS14 family. Zinc-binding uS14 subfamily. Part of the 30S ribosomal subunit. Requires Zn(2+) as cofactor.

Functionally, binds 16S rRNA, required for the assembly of 30S particles. The sequence is that of Small ribosomal subunit protein uS14 from Nanoarchaeum equitans (strain Kin4-M).